A 237-amino-acid polypeptide reads, in one-letter code: uncharacterized protein (237 aa).

The DPCK domain occupies 13 to 218 (VVGLSGGVAT…KSWKPYIFRV (206 aa)). Residue 18–25 (GGVATGKS) coordinates ATP.

The protein belongs to the CoaE family.

This is an uncharacterized protein from Caenorhabditis elegans.